The sequence spans 41 residues: Mu-conotoxin pn4c (41 aa).

A propeptide spanning residues 1–24 (DQPAERMQDDISSEHHPFFDPVKR) is cleaved from the precursor.

This sequence belongs to the conotoxin M superfamily. Post-translationally, contains 3 disulfide bonds. They are not added, since framework IV presents two different connectivities (I-V, II-III, IV-VI and I-III, II-V, IV-VI). In terms of tissue distribution, expressed by the venom duct.

Its subcellular location is the secreted. Its function is as follows. Mu-conotoxins block voltage-gated sodium channels (Nav). Blocks reversibly sodium channels in molluskan neurons, but has no effect on sodium currents in bovine chromaffin cells or in rat brain synaptosomes. Induces paralysis in mollusks (C.retripictus). This is Mu-conotoxin pn4c from Conus pennaceus (Feathered cone).